The primary structure comprises 721 residues: Probable acyl-activating enzyme 17, peroxisomal (721 aa).

Residues 719–721 carry the Microbody targeting signal motif; it reads SKL.

It belongs to the ATP-dependent AMP-binding enzyme family. As to expression, expressed in leaves, stems and developing seeds.

It is found in the peroxisome. Its function is as follows. May act as an acid--thiol ligase that activates carboxylic acids by forming acyl-CoAs. This chain is Probable acyl-activating enzyme 17, peroxisomal (AAE17), found in Arabidopsis thaliana (Mouse-ear cress).